The following is a 636-amino-acid chain: DNA primase (636 aa).

The CHC2-type zinc-finger motif lies at 44 to 68 (CPFHDEKTPSFHVRPNHGHFHCFGC). In terms of domain architecture, Toprim spans 266–352 (HQAVVVEGYT…SGQSFVAVAA (87 aa)). Residues Glu272, Asp323, and Asp325 each coordinate Mg(2+). Basic and acidic residues predominate over residues 443–459 (REEAKGGGRKDNNRRGQ). The disordered stretch occupies residues 443–481 (REEAKGGGRKDNNRRGQETAARPKPPPVQRPDPTDPTLW).

This sequence belongs to the DnaG primase family. In terms of assembly, monomer. Interacts with DnaB. Requires Zn(2+) as cofactor. Mg(2+) serves as cofactor.

It carries out the reaction ssDNA + n NTP = ssDNA/pppN(pN)n-1 hybrid + (n-1) diphosphate.. RNA polymerase that catalyzes the synthesis of short RNA molecules used as primers for DNA polymerase during DNA replication. The polypeptide is DNA primase (Mycolicibacterium smegmatis (strain ATCC 700084 / mc(2)155) (Mycobacterium smegmatis)).